Reading from the N-terminus, the 224-residue chain is MTEKRAVILLSGGLDSATVVAMAKAEGYSCYTMSFDYGQRHRAELNAAARVARDLGVVEHKVIGLNLDGIGGSALTDSSIDVPEAPGEGIPVTYVPARNTVFLSLALGWAEVLEARDIFIGVNAVDYSGYPDCRPEFVEAFERMANLATKAGVEGQGFRIQAPLQNMSKAQIVQAGMARGVDYSLTVSCYQADDDGRACGKCDSCRLRADGFKAAGIEDPTRYF.

ATP is bound at residue 10–20 (LSGGLDSATVV). C189, C199, C202, and C205 together coordinate Zn(2+).

It belongs to the QueC family. The cofactor is Zn(2+).

It catalyses the reaction 7-carboxy-7-deazaguanine + NH4(+) + ATP = 7-cyano-7-deazaguanine + ADP + phosphate + H2O + H(+). It functions in the pathway purine metabolism; 7-cyano-7-deazaguanine biosynthesis. Functionally, catalyzes the ATP-dependent conversion of 7-carboxy-7-deazaguanine (CDG) to 7-cyano-7-deazaguanine (preQ(0)). The sequence is that of 7-cyano-7-deazaguanine synthase from Pseudomonas putida (strain ATCC 47054 / DSM 6125 / CFBP 8728 / NCIMB 11950 / KT2440).